The primary structure comprises 362 residues: Methylthioribose-1-phosphate isomerase (362 aa).

Substrate contacts are provided by residues 53-55, R90, and Q201; that span reads RGA. D242 serves as the catalytic Proton donor. 252–253 contributes to the substrate binding site; that stretch reads NK.

Belongs to the eIF-2B alpha/beta/delta subunits family. MtnA subfamily.

It carries out the reaction 5-(methylsulfanyl)-alpha-D-ribose 1-phosphate = 5-(methylsulfanyl)-D-ribulose 1-phosphate. Its pathway is amino-acid biosynthesis; L-methionine biosynthesis via salvage pathway; L-methionine from S-methyl-5-thio-alpha-D-ribose 1-phosphate: step 1/6. Functionally, catalyzes the interconversion of methylthioribose-1-phosphate (MTR-1-P) into methylthioribulose-1-phosphate (MTRu-1-P). This Paramagnetospirillum magneticum (strain ATCC 700264 / AMB-1) (Magnetospirillum magneticum) protein is Methylthioribose-1-phosphate isomerase.